A 489-amino-acid polypeptide reads, in one-letter code: 5'-AMP-activated protein kinase subunit gamma-3 (489 aa).

The interval 1–95 (MEPELEHTLP…TRQEATFPKA (95 aa)) is disordered. The span at 32 to 47 (GENSWPSPAVATSSER) shows a compositional bias: polar residues. CBS domains lie at 197–258 (MATS…RSPL), 280–340 (CFKP…LLPR), and 355–415 (TFRD…HLDM). ADP-binding positions include arginine 225, 240-245 (MLTITD), valine 285, 306-307 (HR), and lysine 325. AMP contacts are provided by residues arginine 225, 240-245 (MLTITD), valine 285, histidine 306, 306-307 (HR), lysine 325, threonine 355, alanine 360, 381-382 (SA), 397-400 (SRFD), arginine 424, leucine 432, histidine 453, 453-454 (HR), and 469-472 (SLSD). Residues arginine 225, 240 to 245 (MLTITD), valine 285, 306 to 307 (HR), arginine 307, and lysine 325 contribute to the ATP site. An AMPK pseudosubstrate motif is present at residues 293 to 314 (LFEAVYALIKNRIHRLPVLDPV). ADP-binding positions include 397–400 (SRFD), arginine 424, leucine 432, and 453–454 (HR). Residues 397–400 (SRFD), arginine 424, leucine 432, and 453–454 (HR) contribute to the ATP site. A CBS 4 domain is found at 427 to 486 (CLEGVLSCQPHESLGEVIDRIAREQVHRLVLVDETQHLLGVVSLSDILQALVLSPAGIDA).

Belongs to the 5'-AMP-activated protein kinase gamma subunit family. AMPK is a heterotrimer of an alpha catalytic subunit (PRKAA1 or PRKAA2), a beta (PRKAB1 or PRKAB2) and a gamma non-catalytic subunits (PRKAG1, PRKAG2 or PRKAG3). Interacts with FNIP1 and FNIP2. Phosphorylated by ULK1; leading to negatively regulate AMPK activity and suggesting the existence of a regulatory feedback loop between ULK1 and AMPK. In terms of processing, glycosylated; O-GlcNAcylated by OGT, promoting the AMP-activated protein kinase (AMPK) activity.

AMP/ATP-binding subunit of AMP-activated protein kinase (AMPK), an energy sensor protein kinase that plays a key role in regulating cellular energy metabolism. In response to reduction of intracellular ATP levels, AMPK activates energy-producing pathways and inhibits energy-consuming processes: inhibits protein, carbohydrate and lipid biosynthesis, as well as cell growth and proliferation. AMPK acts via direct phosphorylation of metabolic enzymes, and by longer-term effects via phosphorylation of transcription regulators. AMPK also acts as a regulator of cellular polarity by remodeling the actin cytoskeleton; probably by indirectly activating myosin. The AMPK gamma3 subunit is a non-catalytic subunit with a regulatory role in muscle energy metabolism. It mediates binding to AMP, ADP and ATP, leading to AMPK activation or inhibition: AMP-binding results in allosteric activation of alpha catalytic subunit (PRKAA1 or PRKAA2) both by inducing phosphorylation and preventing dephosphorylation of catalytic subunits. ADP also stimulates phosphorylation, without stimulating already phosphorylated catalytic subunit. ATP promotes dephosphorylation of catalytic subunit, rendering the AMPK enzyme inactive. The chain is 5'-AMP-activated protein kinase subunit gamma-3 (Prkag3) from Mus musculus (Mouse).